The following is a 457-amino-acid chain: tRNA-2-methylthio-N(6)-dimethylallyladenosine synthase (457 aa).

Positions 3-120 (KKVYVKTFGC…LPQMIDARRA (118 aa)) constitute an MTTase N-terminal domain. Positions 12, 49, 83, 157, 161, and 164 each coordinate [4Fe-4S] cluster. The region spanning 143–377 (RVEGPSAFVS…QATIEENVAR (235 aa)) is the Radical SAM core domain. In terms of domain architecture, TRAM spans 380-447 (QSMVGKVERI…PHSLRGELVI (68 aa)).

This sequence belongs to the methylthiotransferase family. MiaB subfamily. As to quaternary structure, monomer. [4Fe-4S] cluster is required as a cofactor.

The protein resides in the cytoplasm. The enzyme catalyses N(6)-dimethylallyladenosine(37) in tRNA + (sulfur carrier)-SH + AH2 + 2 S-adenosyl-L-methionine = 2-methylsulfanyl-N(6)-dimethylallyladenosine(37) in tRNA + (sulfur carrier)-H + 5'-deoxyadenosine + L-methionine + A + S-adenosyl-L-homocysteine + 2 H(+). In terms of biological role, catalyzes the methylthiolation of N6-(dimethylallyl)adenosine (i(6)A), leading to the formation of 2-methylthio-N6-(dimethylallyl)adenosine (ms(2)i(6)A) at position 37 in tRNAs that read codons beginning with uridine. In Burkholderia cenocepacia (strain ATCC BAA-245 / DSM 16553 / LMG 16656 / NCTC 13227 / J2315 / CF5610) (Burkholderia cepacia (strain J2315)), this protein is tRNA-2-methylthio-N(6)-dimethylallyladenosine synthase.